A 554-amino-acid chain; its full sequence is Probable oligo-1,6-glucosidase 3 (554 aa).

Asp-199 (nucleophile) is an active-site residue. The active-site Proton donor is the Glu-256.

It belongs to the glycosyl hydrolase 13 family.

It is found in the cytoplasm. It catalyses the reaction Hydrolysis of (1-&gt;6)-alpha-D-glucosidic linkages in some oligosaccharides produced from starch and glycogen by alpha-amylase, and in isomaltose.. This is Probable oligo-1,6-glucosidase 3 (yugT) from Bacillus subtilis (strain 168).